The sequence spans 284 residues: MKIVLISGLSGSGKSVALRQMEDLGYFCVDNLPLEMLPSLVSYHIERADETELAVSVDVRSGIDIAQAREQIAYLRGLGHRVEVLFVEAEEAVLVRRFSETRRGHPLSNQDMTLLESLKKEREWLFPLKEIAYCIDTSKMNAQQLRHAVRQWLKVERTGLLVVLESFGFKYGVPNNADFMFDMRSLPNPYYDPELRPYTGMDKPVWDYLDGQPLAQEMVDGIERFVTRWLPRLEDESRSYVTVAIGCTGGQHRSVYIVEKLARRLKGRYELLIRHRQAQNLSGR.

Position 8–15 (8–15 (GLSGSGKS)) interacts with ATP. A GTP-binding site is contributed by 58-61 (DVRS).

The protein belongs to the RapZ-like family.

Displays ATPase and GTPase activities. The protein is Nucleotide-binding protein NGK_0463 of Neisseria gonorrhoeae (strain NCCP11945).